Reading from the N-terminus, the 207-residue chain is Large ribosomal subunit protein uL4 (207 aa).

A disordered region spans residues 44–81 (KRQGTQSAKTRSEVRGGGRKPWRQKGTGRARQGSIRSP). The segment covering 60-71 (GGRKPWRQKGTG) has biased composition (basic residues).

Belongs to the universal ribosomal protein uL4 family. As to quaternary structure, part of the 50S ribosomal subunit.

Functionally, one of the primary rRNA binding proteins, this protein initially binds near the 5'-end of the 23S rRNA. It is important during the early stages of 50S assembly. It makes multiple contacts with different domains of the 23S rRNA in the assembled 50S subunit and ribosome. In terms of biological role, forms part of the polypeptide exit tunnel. The sequence is that of Large ribosomal subunit protein uL4 from Finegoldia magna (strain ATCC 29328 / DSM 20472 / WAL 2508) (Peptostreptococcus magnus).